A 725-amino-acid polypeptide reads, in one-letter code: Polyribonucleotide nucleotidyltransferase (725 aa).

Residues aspartate 487 and aspartate 493 each coordinate Mg(2+). Positions 554–613 (PRIETMQIPTDKIREVIGTGGKVIREIVEKTGAKIDIQDTGVIKIASSDAKAIKAAYNWI) constitute a KH domain. The S1 motif domain occupies 623-691 (GMIYDGTVVK…ERGKIRLSMK (69 aa)). Residues 697-725 (TGEDITEKLKAEREADRNRERQARQSAGE) are disordered. Residues 701 to 719 (ITEKLKAEREADRNRERQA) show a composition bias toward basic and acidic residues.

The protein belongs to the polyribonucleotide nucleotidyltransferase family. Mg(2+) is required as a cofactor.

It is found in the cytoplasm. It carries out the reaction RNA(n+1) + phosphate = RNA(n) + a ribonucleoside 5'-diphosphate. In terms of biological role, involved in mRNA degradation. Catalyzes the phosphorolysis of single-stranded polyribonucleotides processively in the 3'- to 5'-direction. This is Polyribonucleotide nucleotidyltransferase from Methylobacterium nodulans (strain LMG 21967 / CNCM I-2342 / ORS 2060).